Reading from the N-terminus, the 230-residue chain is 7-cyano-7-deazaguanine synthase (230 aa).

9-19 (ISGGLDSTTCL) is an ATP binding site. Residues Cys192, Cys202, Cys205, and Cys208 each contribute to the Zn(2+) site.

This sequence belongs to the QueC family. Requires Zn(2+) as cofactor.

It carries out the reaction 7-carboxy-7-deazaguanine + NH4(+) + ATP = 7-cyano-7-deazaguanine + ADP + phosphate + H2O + H(+). The protein operates within purine metabolism; 7-cyano-7-deazaguanine biosynthesis. Functionally, catalyzes the ATP-dependent conversion of 7-carboxy-7-deazaguanine (CDG) to 7-cyano-7-deazaguanine (preQ(0)). The chain is 7-cyano-7-deazaguanine synthase from Myxococcus xanthus (strain DK1622).